We begin with the raw amino-acid sequence, 500 residues long: MNDFPWLTIIVIFPISAGSLMLFLPHRGNKVNKWYTICICILELLLTTYAFCYNFKMDDPLIQLSEGYKWINFFDFYWRMGVDGLSIGTILLTGFITTLATLAAFPVTRDSRLFHFLMLAMYSGQIGSFSSRDLLLFFIMWELELIPVYLLLAMWGGKKRLYSATKFILYTAGSSIFLLIGVLGLSLYGSNEPTLNLELLANQSYPVTLEILFYIGFLIAFAVKLPIIPLHTWLPDTHGEAHYSTCMLLAGILLKMGAYGLVRINMELLPHAHSMFSPWLLVVGTIQIIYAASTSPGQRNLKKRIAYSSVSHMGFIIIGISSITDPGLNGAILQIISHGFIGAALFFLAGTSYDRIRLVYLDEMGGMAISIPKIFTMFTILSMASLALPGMSGFVAELIVFFGIITSQKYFLISKILIIFVMAIGMILTPIYLLSMSRQMFYGYKLINVKNFSFFDSGPRELFLSISILLPIIGIGIYPDFVLSLASDKVESILSNYFYG.

14 consecutive transmembrane segments (helical) span residues 4–24 (FPWL…MLFL), 35–55 (YTIC…CYNF), 87–107 (IGTI…AFPV), 113–130 (LFHF…GSFS), 134–154 (LLLF…LLAM), 167–187 (FILY…GLSL), 211–231 (ILFY…IPLH), 242–262 (HYST…YGLV), 272–292 (AHSM…IYAA), 305–325 (IAYS…SITD), 330–350 (GAIL…FLAG), 386–406 (LALP…GIIT), 416–436 (ILII…LLSM), and 462–482 (LFLS…PDFV).

This sequence belongs to the complex I subunit 4 family.

It localises to the plastid. It is found in the chloroplast thylakoid membrane. The enzyme catalyses a plastoquinone + NADH + (n+1) H(+)(in) = a plastoquinol + NAD(+) + n H(+)(out). It catalyses the reaction a plastoquinone + NADPH + (n+1) H(+)(in) = a plastoquinol + NADP(+) + n H(+)(out). The protein is NAD(P)H-quinone oxidoreductase chain 4, chloroplastic of Lepidium virginicum (Virginia pepperweed).